We begin with the raw amino-acid sequence, 287 residues long: Type 1 encapsulin shell protein EncA (287 aa).

Belongs to the encapsulin family. Family 1 subfamily. In terms of assembly, the 32 nm encapsulin nanocompartment is formed by 180 subunits; monomers form pentamers which assemble to form shells. There are 36 pores where the pentamers meet as well as 3-fold axis channels and dimer channels. The N-terminus of the protein is inside the shell.

Its subcellular location is the encapsulin nanocompartment. Its function is as follows. Shell component of a type 1, iron-storage encapsulin nanocompartment. Encapsulin nanocompartments are 32 nm in diameter with an iron- and phosphorus-rich core (4Fe:1P) about 24 nm in diameter. Upon expression in E.coli most particles are 32 nm, 20% are 18 nm. The core is filled with an average of 14 dense granules, 5-6 nm in diameter that are not evenly distributed. Each nanocompartment is estimated to hold 30,000-35,000 Fe atoms. The minor proteins EncB, EncC and EncD probably lie against the interior face of the nanocompartment. This Myxococcus xanthus (strain DK1622) protein is Type 1 encapsulin shell protein EncA.